A 179-amino-acid chain; its full sequence is ATP synthase subunit delta (179 aa).

It belongs to the ATPase delta chain family. In terms of assembly, F-type ATPases have 2 components, F(1) - the catalytic core - and F(0) - the membrane proton channel. F(1) has five subunits: alpha(3), beta(3), gamma(1), delta(1), epsilon(1). F(0) has three main subunits: a(1), b(2) and c(10-14). The alpha and beta chains form an alternating ring which encloses part of the gamma chain. F(1) is attached to F(0) by a central stalk formed by the gamma and epsilon chains, while a peripheral stalk is formed by the delta and b chains.

The protein localises to the cell inner membrane. Its function is as follows. F(1)F(0) ATP synthase produces ATP from ADP in the presence of a proton or sodium gradient. F-type ATPases consist of two structural domains, F(1) containing the extramembraneous catalytic core and F(0) containing the membrane proton channel, linked together by a central stalk and a peripheral stalk. During catalysis, ATP synthesis in the catalytic domain of F(1) is coupled via a rotary mechanism of the central stalk subunits to proton translocation. Functionally, this protein is part of the stalk that links CF(0) to CF(1). It either transmits conformational changes from CF(0) to CF(1) or is implicated in proton conduction. The chain is ATP synthase subunit delta from Maricaulis maris (strain MCS10) (Caulobacter maris).